A 78-amino-acid polypeptide reads, in one-letter code: Sec-independent protein translocase protein TatA (78 aa).

The helical transmembrane segment at 1–21 threads the bilayer; the sequence is MGSLSIWHWIVVIGVVLLLFG. A compositionally biased stretch (basic and acidic residues) spans 42–60; sequence GLQDDEKTAEKPEPVKSID. The disordered stretch occupies residues 42–78; the sequence is GLQDDEKTAEKPEPVKSIDHTAPPAAAPRTDVGSKVV.

It belongs to the TatA/E family. In terms of assembly, the Tat system comprises two distinct complexes: a TatABC complex, containing multiple copies of TatA, TatB and TatC subunits, and a separate TatA complex, containing only TatA subunits. Substrates initially bind to the TatABC complex, which probably triggers association of the separate TatA complex to form the active translocon.

The protein localises to the cell inner membrane. In terms of biological role, part of the twin-arginine translocation (Tat) system that transports large folded proteins containing a characteristic twin-arginine motif in their signal peptide across membranes. TatA could form the protein-conducting channel of the Tat system. This Rhodopseudomonas palustris (strain BisB18) protein is Sec-independent protein translocase protein TatA.